A 467-amino-acid polypeptide reads, in one-letter code: Protein indeterminate-domain 6, chloroplastic (467 aa).

A chloroplast-targeting transit peptide spans M1–S20. Residues T38–D65 form a disordered region. Over residues M39–V48 the composition is skewed to polar residues. Phosphoserine is present on S72. 2 C2H2-type zinc fingers span residues F82–H104 and Y123–H153. Residues W158–G181 form a C2H2-type 2; degenerate zinc finger. 8 residues coordinate Zn(2+): C160, C163, H176, C180, C187, C189, H202, and C206. A CCHC-type 2; atypical zinc finger spans residues Y185–A208. The SHR-binding stretch occupies residues R195 to D207. The interval N440–A467 is disordered.

It localises to the plastid. Its subcellular location is the chloroplast. In terms of biological role, probable transcription factor. The protein is Protein indeterminate-domain 6, chloroplastic of Arabidopsis thaliana (Mouse-ear cress).